A 173-amino-acid polypeptide reads, in one-letter code: Ribosome maturation factor RimP (173 aa).

It belongs to the RimP family.

The protein resides in the cytoplasm. Required for maturation of 30S ribosomal subunits. The chain is Ribosome maturation factor RimP from Chlorobaculum tepidum (strain ATCC 49652 / DSM 12025 / NBRC 103806 / TLS) (Chlorobium tepidum).